A 484-amino-acid chain; its full sequence is Protein nucleotidyltransferase YdiU (484 aa).

Glycine 81, glycine 83, arginine 84, lysine 103, aspartate 115, glycine 116, arginine 166, and arginine 173 together coordinate ATP. The Proton acceptor role is filled by aspartate 244. Mg(2+) is bound by residues asparagine 245 and aspartate 254. Residue aspartate 254 coordinates ATP.

Belongs to the SELO family. It depends on Mg(2+) as a cofactor. Requires Mn(2+) as cofactor.

The enzyme catalyses L-seryl-[protein] + ATP = 3-O-(5'-adenylyl)-L-seryl-[protein] + diphosphate. The catalysed reaction is L-threonyl-[protein] + ATP = 3-O-(5'-adenylyl)-L-threonyl-[protein] + diphosphate. It catalyses the reaction L-tyrosyl-[protein] + ATP = O-(5'-adenylyl)-L-tyrosyl-[protein] + diphosphate. It carries out the reaction L-histidyl-[protein] + UTP = N(tele)-(5'-uridylyl)-L-histidyl-[protein] + diphosphate. The enzyme catalyses L-seryl-[protein] + UTP = O-(5'-uridylyl)-L-seryl-[protein] + diphosphate. The catalysed reaction is L-tyrosyl-[protein] + UTP = O-(5'-uridylyl)-L-tyrosyl-[protein] + diphosphate. Nucleotidyltransferase involved in the post-translational modification of proteins. It can catalyze the addition of adenosine monophosphate (AMP) or uridine monophosphate (UMP) to a protein, resulting in modifications known as AMPylation and UMPylation. The chain is Protein nucleotidyltransferase YdiU from Shewanella baltica (strain OS155 / ATCC BAA-1091).